The primary structure comprises 338 residues: Aspartate--ammonia ligase (338 aa).

Belongs to the class-II aminoacyl-tRNA synthetase family. AsnA subfamily.

Its subcellular location is the cytoplasm. The catalysed reaction is L-aspartate + NH4(+) + ATP = L-asparagine + AMP + diphosphate + H(+). It participates in amino-acid biosynthesis; L-asparagine biosynthesis; L-asparagine from L-aspartate (ammonia route): step 1/1. This chain is Aspartate--ammonia ligase, found in Lactobacillus delbrueckii subsp. bulgaricus (strain ATCC 11842 / DSM 20081 / BCRC 10696 / JCM 1002 / NBRC 13953 / NCIMB 11778 / NCTC 12712 / WDCM 00102 / Lb 14).